Here is a 241-residue protein sequence, read N- to C-terminus: MIEWREEGVLLSVRPHGETSVIVEAFTRAHGRHLGVVRGGVSRKLAPVLQPGAQLDLRWKARLEDHMGAFTVEPVRGRAAAVLGDRLALSAMSSALALARFSLAERAAYPGFYDQTVALLDALAEGTGWLPAYLDWEMALLDQMGFGLDLSGCAVRGVNEDLAFVSPRTGRAVSRQAAGAWVDRLLPLPEVMLGGPAHLHGVLEGLTTTGHFLEHKLAPALGNRPPPEARARFIDVLSRAR.

The protein belongs to the RecO family.

In terms of biological role, involved in DNA repair and RecF pathway recombination. The chain is DNA repair protein RecO from Dinoroseobacter shibae (strain DSM 16493 / NCIMB 14021 / DFL 12).